A 134-amino-acid polypeptide reads, in one-letter code: MFSASCSVTVVVLLITVRRTNGASVTQTEGPVILSEGSSLTLNCNYQTSYSGFLFWYVQYLHEGPQLLLQSTTENQRMEHQGFHATFVKKDSSFHLHKSSLQLSDSAVYYCALRRGASNKLTLGTGTLLKVELN.

The N-terminal stretch at 1–20 is a signal peptide; that stretch reads MFSASCSVTVVVLLITVRRT. The tract at residues 21-114 is v segment; that stretch reads NGASVTQTEG…DSAVYYCALR (94 aa). The interval 115–134 is j segment; it reads RGASNKLTLGTGTLLKVELN. An N-linked (GlcNAc...) asparagine glycan is attached at asparagine 134.

Rearrangement with the C region would elongate the sequence with Ile-Thr-; which creates a potential N-glycosylation site at Asn-134.

The polypeptide is T-cell receptor alpha chain V region RL-5 (Oryctolagus cuniculus (Rabbit)).